The following is a 230-amino-acid chain: Increased recombination centers protein 19 (230 aa).

This sequence belongs to the IRC19 family.

Its function is as follows. Involved in sporulation and maintenance of the mitochondrial DNA. Is probably involved in a pathway contributing to genomic integrity. This Saccharomyces cerevisiae (strain JAY291) (Baker's yeast) protein is Increased recombination centers protein 19 (IRC19).